The chain runs to 599 residues: Laccase-2 (599 aa).

The signal sequence occupies residues 1-19 (MARSTTSLFALSLVASAFA). Plastocyanin-like domains are found at residues 21-145 (VVDY…IVIY) and 157-307 (VDDE…LVYE). Residues His-82, His-84, His-127, and His-129 each coordinate Cu cation. Cysteines 103 and 588 form a disulfide. Asn-207, Asn-208, Asn-231, Asn-397, and Asn-443 each carry an N-linked (GlcNAc...) asparagine glycan. Residues 450-567 (DVPTLLKILT…EGFAMVFAEA (118 aa)) form the Plastocyanin-like 3 domain. Residues His-497, His-500, His-502, His-549, Cys-550, His-551, and His-555 each coordinate Cu cation.

It belongs to the multicopper oxidase family. In terms of assembly, homodimer. Cu cation serves as cofactor. In mycelia, at a lower level than LCC4.

The protein localises to the secreted. It carries out the reaction 4 hydroquinone + O2 = 4 benzosemiquinone + 2 H2O. Functionally, lignin degradation and detoxification of lignin-derived products. This Thanatephorus cucumeris (Black scurf of potato) protein is Laccase-2 (LCC2).